We begin with the raw amino-acid sequence, 115 residues long: Peptidyl-tRNA hydrolase (115 aa).

It belongs to the PTH2 family.

Its subcellular location is the cytoplasm. The enzyme catalyses an N-acyl-L-alpha-aminoacyl-tRNA + H2O = an N-acyl-L-amino acid + a tRNA + H(+). The natural substrate for this enzyme may be peptidyl-tRNAs which drop off the ribosome during protein synthesis. The protein is Peptidyl-tRNA hydrolase (pth) of Nanoarchaeum equitans (strain Kin4-M).